The sequence spans 200 residues: Ras-related protein Rab-10 (200 aa).

GTP contacts are provided by Ser18, Gly19, Val20, Gly21, Lys22, Thr23, Cys24, Asn35, Thr36, Ser40, and Thr41. A Mg(2+)-binding site is contributed by Thr23. 2 short sequence motifs (switch) span residues 32 to 46 and 64 to 81; these read DAFN…GIDF and DTAG…YYRG. Mg(2+)-binding residues include Thr41 and Asp64. Gly67 is a GTP binding site. Thr73 carries the phosphothreonine; by LRRK2 modification. Lys102 carries the post-translational modification N6-acetyllysine. A Glycyl lysine isopeptide (Lys-Gly) (interchain with G-Cter in ubiquitin) cross-link involves residue Lys102. GTP-binding residues include Asn122, Lys123, Asp125, and Met126. Lys136 is covalently cross-linked (Glycyl lysine isopeptide (Lys-Gly) (interchain with G-Cter in ubiquitin)). Residues Ser152, Ala153, and Lys154 each contribute to the GTP site. A Glycyl lysine isopeptide (Lys-Gly) (interchain with G-Cter in ubiquitin) cross-link involves residue Lys154. 2 S-geranylgeranyl cysteine lipidation sites follow: Cys199 and Cys200.

The protein belongs to the small GTPase superfamily. Rab family. In terms of assembly, interacts with MYO5A; mediates the transport to the plasma membrane of SLC2A4/GLUT4 storage vesicles. Interacts with GDI1 and with GDI2; negatively regulates RAB10 association with membranes and activation. Interacts (GDP-bound form) with LLGL1; the interaction is direct and promotes RAB10 association with membranes and activation through competition with the Rab inhibitor GDI1. Interacts with EXOC4; probably associates with the exocyst. Interacts (GTP-bound form) with MICALCL, MICAL1, MICAL3, EHBP1 and EHBP1L1; at least in case of MICAL1 two molecules of RAB10 can bind to one molecule of MICAL1. Interacts with TBC1D13. Interacts with SEC16A. Interacts with CHM and CHML. Interacts with LRRK2; interaction facilitates phosphorylation of Thr-73. Interacts (when phosphorylated on Thr-73) with RILPL1 and RILPL2. Interacts with TBC1D21. Interacts with MARCKS. The cofactor is Mg(2+). Ubiquitinated upon Legionella pneumophila infection. Ubiquitination does not lead to proteasomal degradation. In terms of processing, phosphorylation of Thr-73 in the switch II region by LRRK2 prevents the association of dRAB regulatory proteins, including CHM, CHML and RAB GDP dissociation inhibitors GDI1 and GDI2. Phosphorylation of Thr-73 by LRRK2 is stimulated by RAB29 and RAB32. Phosphorylation by LRRK2 is required for localization to stressed lysosomes. Expressed in the hippocampus. Expressed in neutrophils (at protein level). Expressed in the testis (at protein level).

It localises to the cytoplasmic vesicle membrane. It is found in the golgi apparatus membrane. Its subcellular location is the golgi apparatus. The protein resides in the trans-Golgi network membrane. The protein localises to the endosome membrane. It localises to the recycling endosome membrane. It is found in the cytoplasmic vesicle. Its subcellular location is the phagosome membrane. The protein resides in the cytoplasm. The protein localises to the cytoskeleton. It localises to the cilium basal body. It is found in the endoplasmic reticulum membrane. Its subcellular location is the perinuclear region. The protein resides in the lysosome. The enzyme catalyses GTP + H2O = GDP + phosphate + H(+). Its activity is regulated as follows. Regulated by guanine nucleotide exchange factors (GEFs) DENND4C and RABIF which promote the exchange of bound GDP for free GTP. Regulated by GTPase activating proteins (GAPs) including TBC1D21 which increase the GTP hydrolysis activity. Inhibited by GDP dissociation inhibitors GDI1 and GDI2 which prevent Rab-GDP dissociation. The small GTPases Rab are key regulators of intracellular membrane trafficking, from the formation of transport vesicles to their fusion with membranes. Rabs cycle between an inactive GDP-bound form and an active GTP-bound form that is able to recruit to membranes different set of downstream effectors directly responsible for vesicle formation, movement, tethering and fusion. That Rab is mainly involved in the biosynthetic transport of proteins from the Golgi to the plasma membrane. Regulates, for instance, SLC2A4/GLUT4 glucose transporter-enriched vesicles delivery to the plasma membrane. In parallel, it regulates the transport of TLR4, a toll-like receptor to the plasma membrane and therefore may be important for innate immune response. Also plays a specific role in asymmetric protein transport to the plasma membrane. In neurons, it is involved in axonogenesis through regulation of vesicular membrane trafficking toward the axonal plasma membrane. In epithelial cells, it regulates transport from the Golgi to the basolateral membrane. May play a role in the basolateral recycling pathway and in phagosome maturation. May play a role in endoplasmic reticulum dynamics and morphology controlling tubulation along microtubules and tubules fusion. Together with LRRK2, RAB8A, and RILPL1, it regulates ciliogenesis. When phosphorylated by LRRK2 on Thr-73, binds RILPL1 and inhibits ciliogenesis. Participates in the export of a subset of neosynthesized proteins through a Rab8-Rab10-Rab11-dependent endososomal export route. Targeted to and stabilized on stressed lysosomes through LRRK2 phosphorylation where it promotes the extracellular release of lysosomal content through EHBP1 and EHNP1L1 effector proteins. Its function is as follows. (Microbial infection) Upon Legionella pneumophila infection promotes endoplasmic reticulum recruitment and bacterial replication. Plays a role in remodeling the Legionella-containing vacuole (LCV) into an endoplasmic reticulum-like vacuole. The polypeptide is Ras-related protein Rab-10 (Homo sapiens (Human)).